A 331-amino-acid polypeptide reads, in one-letter code: Phosphate acyltransferase (331 aa).

The protein belongs to the PlsX family. As to quaternary structure, homodimer. Probably interacts with PlsY.

The protein resides in the cytoplasm. The catalysed reaction is a fatty acyl-[ACP] + phosphate = an acyl phosphate + holo-[ACP]. Its pathway is lipid metabolism; phospholipid metabolism. Its function is as follows. Catalyzes the reversible formation of acyl-phosphate (acyl-PO(4)) from acyl-[acyl-carrier-protein] (acyl-ACP). This enzyme utilizes acyl-ACP as fatty acyl donor, but not acyl-CoA. This is Phosphate acyltransferase from Exiguobacterium sibiricum (strain DSM 17290 / CCUG 55495 / CIP 109462 / JCM 13490 / 255-15).